A 444-amino-acid chain; its full sequence is Methylenetetrahydrofolate--tRNA-(uracil-5-)-methyltransferase TrmFO (444 aa).

10–15 lines the FAD pocket; the sequence is GAGLAG.

The protein belongs to the MnmG family. TrmFO subfamily. The cofactor is FAD.

Its subcellular location is the cytoplasm. The enzyme catalyses uridine(54) in tRNA + (6R)-5,10-methylene-5,6,7,8-tetrahydrofolate + NADH + H(+) = 5-methyluridine(54) in tRNA + (6S)-5,6,7,8-tetrahydrofolate + NAD(+). It catalyses the reaction uridine(54) in tRNA + (6R)-5,10-methylene-5,6,7,8-tetrahydrofolate + NADPH + H(+) = 5-methyluridine(54) in tRNA + (6S)-5,6,7,8-tetrahydrofolate + NADP(+). In terms of biological role, catalyzes the folate-dependent formation of 5-methyl-uridine at position 54 (M-5-U54) in all tRNAs. The sequence is that of Methylenetetrahydrofolate--tRNA-(uracil-5-)-methyltransferase TrmFO from Streptococcus suis (strain 98HAH33).